Reading from the N-terminus, the 253-residue chain is Anamorsin homolog (253 aa).

Residues 4-129 (FKGLQKSLYI…ETGSSARLSF (126 aa)) form an N-terminal SAM-like domain region. The segment at 130 to 161 (AKKNSSTLNVWKISGDDDELIDEEDLLDEVDK) is linker. Positions 172, 181, 184, and 186 each coordinate [2Fe-2S] cluster. The tract at residues 172 to 186 (CSTTGKRKACKNCSC) is fe-S binding site A. The [4Fe-4S] cluster site is built by Cys-214, Cys-217, Cys-225, and Cys-228. Short sequence motifs (cx2C motif) lie at residues 214–217 (CGNC) and 225–228 (CSSC). Positions 214 to 228 (CGNCYLGDAFRCSSC) are fe-S binding site B.

The protein belongs to the anamorsin family. In terms of assembly, monomer. The cofactor is [2Fe-2S] cluster. It depends on [4Fe-4S] cluster as a cofactor.

It is found in the cytoplasm. The protein localises to the mitochondrion intermembrane space. Functionally, component of the cytosolic iron-sulfur (Fe-S) protein assembly (CIA) machinery. Required for the maturation of extramitochondrial Fe-S proteins. Part of an electron transfer chain functioning in an early step of cytosolic Fe-S biogenesis, facilitating the de novo assembly of a [4Fe-4S] cluster on the cytosolic Fe-S scaffold complex. Electrons are transferred from NADPH via a FAD- and FMN-containing diflavin oxidoreductase. Together with the diflavin oxidoreductase, also required for the assembly of the diferric tyrosyl radical cofactor of ribonucleotide reductase (RNR), probably by providing electrons for reduction during radical cofactor maturation in the catalytic small subunit. The polypeptide is Anamorsin homolog (Drosophila willistoni (Fruit fly)).